A 157-amino-acid chain; its full sequence is 2-C-methyl-D-erythritol 2,4-cyclodiphosphate synthase (157 aa).

A divalent metal cation contacts are provided by Asp-8 and His-10. 4-CDP-2-C-methyl-D-erythritol 2-phosphate contacts are provided by residues 8-10 (DVH) and 34-35 (HS). Position 42 (His-42) interacts with a divalent metal cation. 4-CDP-2-C-methyl-D-erythritol 2-phosphate is bound by residues 56–58 (DIG), 61–65 (FPDTD), 100–106 (AQAPKMA), 132–135 (TTTE), Phe-139, and Arg-142.

This sequence belongs to the IspF family. As to quaternary structure, homotrimer. A divalent metal cation serves as cofactor.

It carries out the reaction 4-CDP-2-C-methyl-D-erythritol 2-phosphate = 2-C-methyl-D-erythritol 2,4-cyclic diphosphate + CMP. It participates in isoprenoid biosynthesis; isopentenyl diphosphate biosynthesis via DXP pathway; isopentenyl diphosphate from 1-deoxy-D-xylulose 5-phosphate: step 4/6. In terms of biological role, involved in the biosynthesis of isopentenyl diphosphate (IPP) and dimethylallyl diphosphate (DMAPP), two major building blocks of isoprenoid compounds. Catalyzes the conversion of 4-diphosphocytidyl-2-C-methyl-D-erythritol 2-phosphate (CDP-ME2P) to 2-C-methyl-D-erythritol 2,4-cyclodiphosphate (ME-CPP) with a corresponding release of cytidine 5-monophosphate (CMP). This is 2-C-methyl-D-erythritol 2,4-cyclodiphosphate synthase from Pseudomonas fluorescens (strain SBW25).